The primary structure comprises 495 residues: Protein adenylyltransferase Fic (495 aa).

A disordered region spans residues 1 to 23 (MGTEAEPPSPPSPPAQQQEQANP). Residues 36–58 (LYRLVLFFIAGSLTAWMFHAFSS) traverse the membrane as a helical segment. 2 TPR repeats span residues 121–154 (ALVS…APRH) and 155–189 (PEVL…SPSN). The short motif at 246–251 (SVGIEG) is the Inhibitory (S/T)XXXE(G/N) motif element. ATP contacts are provided by residues Glu-250 and 331 to 334 (VGGH). Positions 300 to 435 (ITIKDILELH…IRPFVRFIAD (136 aa)) constitute a Fido domain. His-378 is an active-site residue. Residues 382-389 (DGNGRTSR), 414-415 (YY), and Asn-422 each bind ATP.

The protein belongs to the fic family. In terms of assembly, homodimer.

The protein resides in the membrane. It catalyses the reaction L-tyrosyl-[protein] + ATP = O-(5'-adenylyl)-L-tyrosyl-[protein] + diphosphate. The enzyme catalyses L-threonyl-[protein] + ATP = 3-O-(5'-adenylyl)-L-threonyl-[protein] + diphosphate. It carries out the reaction 3-O-(5'-adenylyl)-L-threonyl-[protein] + H2O = L-threonyl-[protein] + AMP + H(+). The side chain of Glu-250 determines which of the two opposing activities (AMPylase or de-AMPylase) will take place. In response to endoplasmic reticulum stress, mediates de-AMPylase activity. Adenylyltransferase activity is inhibited by the inhibitory helix present at the N-terminus: Glu-250 binds ATP and competes with ATP-binding at Arg-389, thereby preventing adenylyltransferase activity. In unstressed cells, disengagement of Glu-250 promotes adenylyltransferase activity. Activation dissociates ATP-binding from Glu-250, allowing ordered binding of the entire ATP moiety with the alpha-phosphate in an orientation that is productive for accepting an incoming target hydroxyl side chain. Its function is as follows. Protein that can both mediate the addition of adenosine 5'-monophosphate (AMP) to specific residues of target proteins (AMPylation), and the removal of the same modification from target proteins (de-AMPylation), depending on the context. The side chain of Glu-250 determines which of the two opposing activities (AMPylase or de-AMPylase) will take place. Acts as a key regulator of the unfolded protein response (UPR) by mediating AMPylation or de-AMPylation of Hsc70-3/BiP. In unstressed cells, acts as an adenylyltransferase by mediating AMPylation of Hsc70-3/BiP at 'Thr-518', thereby inactivating it. In response to endoplasmic reticulum stress, acts as a phosphodiesterase by mediating removal of ATP (de-AMPylation) from Hsc70-3/BiP at 'Thr-518', leading to restore HSPA5/BiP activity. The protein is Protein adenylyltransferase Fic of Drosophila erecta (Fruit fly).